A 238-amino-acid polypeptide reads, in one-letter code: Uridylate kinase (238 aa).

Position 12–15 (12–15 (KLSG)) interacts with ATP. Positions 20 to 25 (GQQGFG) are involved in allosteric activation by GTP. G54 provides a ligand contact to UMP. ATP is bound by residues G55 and R59. Residues D74 and 135–142 (TGNPFFTT) each bind UMP. ATP is bound by residues T162, N163, Y168, and D171.

It belongs to the UMP kinase family. Homohexamer.

Its subcellular location is the cytoplasm. It catalyses the reaction UMP + ATP = UDP + ADP. Its pathway is pyrimidine metabolism; CTP biosynthesis via de novo pathway; UDP from UMP (UMPK route): step 1/1. With respect to regulation, allosterically activated by GTP. Inhibited by UTP. Catalyzes the reversible phosphorylation of UMP to UDP. In Bradyrhizobium diazoefficiens (strain JCM 10833 / BCRC 13528 / IAM 13628 / NBRC 14792 / USDA 110), this protein is Uridylate kinase.